We begin with the raw amino-acid sequence, 487 residues long: L-tartrate/succinate antiporter (487 aa).

Residues 1–9 are Periplasmic-facing; it reads MKPSTEWWR. Residues 10 to 30 form a helical membrane-spanning segment; sequence YLAPLAVIAIIALLPVPAGLE. Residues 31–32 lie on the Cytoplasmic side of the membrane; that stretch reads NH. The next 2 membrane-spanning stretches (helical) occupy residues 33–53 and 54–74; these read TWLYFAVFTGVIVGLILEPVP and GAVVAMVGISIIAILSPWLLF. Over 75 to 92 the chain is Cytoplasmic; it reads SPEQLAQPGFKFTAKSLS. Residues 93-113 form a helical membrane-spanning segment; sequence WAVSGFSNSVIWLIFAAFMFG. Topologically, residues 114–136 are periplasmic; the sequence is TGYEKTGLGRRIALILVKKMGHR. The chain crosses the membrane as a helical span at residues 137–157; sequence TLFLGYAVMFSELILAPVTPS. The Cytoplasmic segment spans residues 158–188; that stretch reads NSARGAGIIYPIIRNLPPLYQSQPNDSSSRS. A helical transmembrane segment spans residues 189–209; it reads IGSYIMWMGIVADCVTSAIFL. The Periplasmic segment spans residues 210–235; the sequence is TAMAPNLLLIGLMKSASHATLSWGDW. The chain crosses the membrane as a helical span at residues 236–256; that stretch reads FLGMLPLSILLVLLVPWLAYV. Residues 257 to 291 are Cytoplasmic-facing; sequence LYPPVLKSGDQVPRWAETELQAMGPLCSREKRMLG. The next 2 membrane-spanning stretches (helical) occupy residues 292-312 and 313-333; these read LMVGALVLWIFGGDYIDAAMV and GYSVVALMLLLRIISWDDIVS. The Cytoplasmic portion of the chain corresponds to 334-339; sequence NKAAWN. A helical transmembrane segment spans residues 340 to 360; it reads VFFWLASLITLATGLNNTGFI. Residues 361-369 lie on the Periplasmic side of the membrane; the sequence is SWFGKLLAG. Residues 370 to 390 traverse the membrane as a helical segment; the sequence is SLSGYSPTMVMVALIVVFYLL. The Cytoplasmic segment spans residues 391-392; the sequence is RY. Residues 393 to 413 traverse the membrane as a helical segment; that stretch reads FFASATAYTSALAPMMIAAAL. The Periplasmic portion of the chain corresponds to 414–417; that stretch reads AMPE. Residues 418-438 form a helical membrane-spanning segment; the sequence is IPLPVFCLMVGAAIGLGSILT. The Cytoplasmic segment spans residues 439 to 464; sequence PYATGPSPIYYGSGYLPTADYWRLGA. A helical membrane pass occupies residues 465–485; the sequence is IFGLIFLVLLVITGLLWMPVV. Residues 486-487 lie on the Periplasmic side of the membrane; that stretch reads LL.

Belongs to the SLC13A/DASS transporter (TC 2.A.47) family. DIT1 subfamily.

The protein localises to the cell inner membrane. It carries out the reaction (2R,3R)-tartrate(out) + succinate(in) = (2R,3R)-tartrate(in) + succinate(out). Functionally, catalyzes the uptake of tartrate in exchange for intracellular succinate. Essential for anaerobic L-tartrate fermentation. The protein is L-tartrate/succinate antiporter of Escherichia coli (strain K12).